A 188-amino-acid chain; its full sequence is MGIDINHKYDRKVRRTEPRSQDIYLRLLVKVYRFLARRTNSKFSRIILKRLFMSRINLPPISLARVCRFMKKESRKNSIAVVVGTITDDARIFEIPKLKVCALRITEKARGRILKAGGEIITFEKLAEISPTGNKTVLMQGRRNAREAVKHFGPAPGVPHSHTKPLVRSKGRKFERARGRRKSCGYKK.

Residues 151–188 (HFGPAPGVPHSHTKPLVRSKGRKFERARGRRKSCGYKK) form a disordered region. 2 stretches are compositionally biased toward basic residues: residues 161–171 (SHTKPLVRSKG) and 178–188 (RGRRKSCGYKK).

It belongs to the eukaryotic ribosomal protein eL18 family.

It is found in the cytoplasm. The chain is Large ribosomal subunit protein eL18 (RpL18) from Lysiphlebus testaceipes (Greenbugs aphid parastoid).